We begin with the raw amino-acid sequence, 117 residues long: Large ribosomal subunit protein bL20 (117 aa).

This sequence belongs to the bacterial ribosomal protein bL20 family.

In terms of biological role, binds directly to 23S ribosomal RNA and is necessary for the in vitro assembly process of the 50S ribosomal subunit. It is not involved in the protein synthesizing functions of that subunit. In Citrifermentans bemidjiense (strain ATCC BAA-1014 / DSM 16622 / JCM 12645 / Bem) (Geobacter bemidjiensis), this protein is Large ribosomal subunit protein bL20.